Consider the following 278-residue polypeptide: MTTRIDIRFAQLKREGRPAFVTFVMAGDPDLATSLQLLKALPTAGADIIEIGMPFTDPMADGPAIQAAGLRALHGGTTLHKTLELVGDFRKDDATTPVVLMGYYNPIYIYGVDAFLADAKAAGVDGLIIVDLPPEEDAELCLPAMKAGLNFIRLATPTTDEKRLPAVLANTSGFVYYVSITGITGSASADSVAVGDAVARIKRHTDLPVCVGFGIRTPEGARAIAAQADGAVVGSALIDALQKTLDTDNRATQATVGAVADLVASLAAGVRGAQQAAE.

Active-site proton acceptor residues include E50 and D61.

This sequence belongs to the TrpA family. In terms of assembly, tetramer of two alpha and two beta chains.

It catalyses the reaction (1S,2R)-1-C-(indol-3-yl)glycerol 3-phosphate + L-serine = D-glyceraldehyde 3-phosphate + L-tryptophan + H2O. It functions in the pathway amino-acid biosynthesis; L-tryptophan biosynthesis; L-tryptophan from chorismate: step 5/5. In terms of biological role, the alpha subunit is responsible for the aldol cleavage of indoleglycerol phosphate to indole and glyceraldehyde 3-phosphate. The sequence is that of Tryptophan synthase alpha chain from Rhodopseudomonas palustris (strain HaA2).